The primary structure comprises 245 residues: Ribonuclease PH (245 aa).

Phosphate is bound by residues arginine 93 and 131 to 133 (GTR).

Belongs to the RNase PH family. Homohexameric ring arranged as a trimer of dimers.

It catalyses the reaction tRNA(n+1) + phosphate = tRNA(n) + a ribonucleoside 5'-diphosphate. Phosphorolytic 3'-5' exoribonuclease that plays an important role in tRNA 3'-end maturation. Removes nucleotide residues following the 3'-CCA terminus of tRNAs; can also add nucleotides to the ends of RNA molecules by using nucleoside diphosphates as substrates, but this may not be physiologically important. Probably plays a role in initiation of 16S rRNA degradation (leading to ribosome degradation) during starvation. The chain is Ribonuclease PH from Corynebacterium glutamicum (strain R).